The sequence spans 212 residues: Ras-related protein Rab-15 (212 aa).

Ser17, Gly18, Val19, Gly20, Lys21, Thr22, Cys23, Ser35, Ser39, and Thr40 together coordinate GTP. Thr22 is a binding site for Mg(2+). Short sequence motifs (switch) lie at residues 31 to 45 and 63 to 80; these read NEFHSSHISTIGVDF and DTAGQERYQTITKQYYRR. 2 residues coordinate Mg(2+): Thr40 and Asp63. Residues Gly66, Asn121, Lys122, Asp124, Ser151, and Ala152 each contribute to the GTP site. The disordered stretch occupies residues 193–212; the sequence is LEEEEGKPEGPANSSKTCWC. 2 S-geranylgeranyl cysteine lipidation sites follow: Cys210 and Cys212. At Cys212 the chain carries Cysteine methyl ester.

The protein belongs to the small GTPase superfamily. Rab family. As to quaternary structure, the GTP bound form of RAB15 interacts with REP15. Interacts (GTP-bound form) with MICAL1, MICAL3, MICALCL, EHBP1 and EHBP1L1. It depends on Mg(2+) as a cofactor.

Its subcellular location is the cell membrane. The catalysed reaction is GTP + H2O = GDP + phosphate + H(+). Regulated by guanine nucleotide exchange factors (GEFs) which promote the exchange of bound GDP for free GTP. Regulated by GTPase activating proteins (GAPs) which increase the GTP hydrolysis activity. Inhibited by GDP dissociation inhibitors (GDIs). Its function is as follows. The small GTPases Rab are key regulators of intracellular membrane trafficking, from the formation of transport vesicles to their fusion with membranes. Rabs cycle between an inactive GDP-bound form and an active GTP-bound form that is able to recruit to membranes different sets of downstream effectors directly responsible for vesicle formation, movement, tethering and fusion. RAB15 may act in concert with RAB3A in regulating aspects of synaptic vesicle membrane flow within the nerve terminal. This chain is Ras-related protein Rab-15, found in Homo sapiens (Human).